The chain runs to 128 residues: Profilin (128 aa).

Belongs to the profilin family.

More likely to influence phosphoinositide metabolism than actin assembly. The sequence is that of Profilin from Homo sapiens (Human).